Reading from the N-terminus, the 2196-residue chain is Genome polyprotein (2196 aa).

A lipid anchor (N-myristoyl glycine; by host) is attached at Gly2. At 2 to 1506 (GAQVSTQKTG…HVSRAFICLQ (1505 aa)) the chain is on the cytoplasmic side. Residues 568–584 (DLQGDSEHAVESAVSRV) form an amphipathic alpha-helix region. Residues His883 and Asp901 each act as for protease 2A activity in the active site. The Zn(2+) site is built by Cys918 and Cys920. Cys972 serves as the catalytic For protease 2A activity. Zn(2+)-binding residues include Cys978 and His980. The membrane-binding stretch occupies residues 1112–1184 (NNGWLKKFTE…EQSAPSQSDQ (73 aa)). An oligomerization region spans residues 1112 to 1250 (NNGWLKKFTE…SPGAGKSVAT (139 aa)). Residues 1133–1137 (AIKIQ) are RNA-binding. The SF3 helicase domain occupies 1216–1372 (EKKMSNYIQF…SMYSQNGKIN (157 aa)). Residues Cys1380, Cys1392, and Cys1397 each contribute to the Zn(2+) site. The segment at 1380-1397 (CDEECCPVNFKKCCPLVC) adopts a C4-type; degenerate zinc-finger fold. The interval 1424-1431 (EYNHRHSV) is RNA-binding. Residues 1435–1440 (LEALFQ) are oligomerization. An intramembrane segment occupies 1507-1522 (ALTTFVSVAGIIYIIY). The Cytoplasmic segment spans residues 1523 to 2196 (KLFAGFQGAY…TLRRKWLDSF (674 aa)). The residue at position 1532 (Tyr1532) is an O-(5'-phospho-RNA)-tyrosine. A Peptidase C3 domain is found at 1552-1730 (GPAFEFAVAM…FSAALLKHYF (179 aa)). Active-site for protease 3C activity residues include His1591, Glu1622, and Cys1698. A RdRp catalytic domain is found at 1961–2077 (GHLIAFDYSG…SYPWPIDASL (117 aa)). Asp1967 and Asp2063 together coordinate Mg(2+).

Belongs to the picornaviruses polyprotein family. As to quaternary structure, interacts with capsid protein VP1 and capsid protein VP3 to form heterotrimeric protomers. Interacts with capsid protein VP0, and capsid protein VP3 to form heterotrimeric protomers. Five protomers subsequently associate to form pentamers which serve as building blocks for the capsid. Interacts with capsid protein VP2, capsid protein VP3 and capsid protein VP4 following cleavage of capsid protein VP0. In terms of assembly, interacts with capsid protein VP1 and capsid protein VP3 in the mature capsid. As to quaternary structure, interacts with capsid protein VP0 and capsid protein VP1 to form heterotrimeric protomers. Five protomers subsequently associate to form pentamers which serve as building blocks for the capsid. Interacts with capsid protein VP4 in the mature capsid. Interacts with protein 2C; this interaction may be important for virion morphogenesis. Interacts with capsid protein VP1 and capsid protein VP3. In terms of assembly, homodimer. As to quaternary structure, homohexamer; forms a hexameric ring structure with 6-fold symmetry characteristic of AAA+ ATPases. Interacts (via N-terminus) with host RTN3 (via reticulon domain); this interaction is important for viral replication. Interacts with capsid protein VP3; this interaction may be important for virion morphogenesis. Interacts with protein 3CD. In terms of assembly, homodimer. Interacts with host GBF1. Interacts (via GOLD domain) with host ACBD3 (via GOLD domain); this interaction allows the formation of a viral protein 3A/ACBD3 heterotetramer with a 2:2 stoichiometry, which will stimulate the recruitment of host PI4KB in order to synthesize PI4P at the viral RNA replication sites. As to quaternary structure, interacts with RNA-directed RNA polymerase. Interacts with protein 3AB and with RNA-directed RNA polymerase. In terms of assembly, interacts with Viral protein genome-linked and with protein 3CD. Mg(2+) serves as cofactor. In terms of processing, specific enzymatic cleavages in vivo by the viral proteases yield processing intermediates and the mature proteins. Post-translationally, myristoylation is required for the formation of pentamers during virus assembly. Further assembly of 12 pentamers and a molecule of genomic RNA generates the provirion. During virion maturation, immature virions are rendered infectious following cleavage of VP0 into VP4 and VP2. This maturation seems to be an autocatalytic event triggered by the presence of RNA in the capsid and it is followed by a conformational change infectious virion. In terms of processing, myristoylation is required during RNA encapsidation and formation of the mature virus particle. Post-translationally, VPg is uridylylated by the polymerase into VPg-pUpU. This acts as a nucleotide-peptide primer for the genomic RNA replication.

The protein resides in the virion. Its subcellular location is the host cytoplasm. The protein localises to the host cytoplasmic vesicle membrane. It is found in the host nucleus. The enzyme catalyses a ribonucleoside 5'-triphosphate + H2O = a ribonucleoside 5'-diphosphate + phosphate + H(+). The catalysed reaction is Selective cleavage of Tyr-|-Gly bond in the picornavirus polyprotein.. It carries out the reaction RNA(n) + a ribonucleoside 5'-triphosphate = RNA(n+1) + diphosphate. It catalyses the reaction Selective cleavage of Gln-|-Gly bond in the poliovirus polyprotein. In other picornavirus reactions Glu may be substituted for Gln, and Ser or Thr for Gly.. Replication or transcription is subject to high level of random mutations by the nucleotide analog ribavirin. Forms an icosahedral capsid of pseudo T=3 symmetry with capsid proteins VP2 and VP3. The capsid is 300 Angstroms in diameter, composed of 60 copies of each capsid protein and enclosing the viral positive strand RNA genome. Capsid protein VP1 mainly forms the vertices of the capsid. Capsid protein VP1 interacts with host cell receptor to provide virion attachment to target host cells. This attachment induces virion internalization. Tyrosine kinases are probably involved in the entry process. After binding to its receptor, the capsid undergoes conformational changes. Capsid protein VP1 N-terminus (that contains an amphipathic alpha-helix) and capsid protein VP4 are externalized. Together, they shape a pore in the host membrane through which viral genome is translocated to host cell cytoplasm. In terms of biological role, forms an icosahedral capsid of pseudo T=3 symmetry with capsid proteins VP2 and VP3. The capsid is 300 Angstroms in diameter, composed of 60 copies of each capsid protein and enclosing the viral positive strand RNA genome. Its function is as follows. Lies on the inner surface of the capsid shell. After binding to the host receptor, the capsid undergoes conformational changes. Capsid protein VP4 is released, Capsid protein VP1 N-terminus is externalized, and together, they shape a pore in the host membrane through which the viral genome is translocated into the host cell cytoplasm. Functionally, component of immature procapsids, which is cleaved into capsid proteins VP4 and VP2 after maturation. Allows the capsid to remain inactive before the maturation step. Cysteine protease that cleaves viral polyprotein and specific host proteins. It is responsible for the autocatalytic cleavage between the P1 and P2 regions, which is the first cleavage occurring in the polyprotein. Also cleaves the host translation initiation factor EIF4G1, in order to shut down the capped cellular mRNA translation. Inhibits the host nucleus-cytoplasm protein and RNA trafficking by cleaving host members of the nuclear pores. Counteracts stress granule formation probably by antagonizing its assembly or promoting its dissassembly. In terms of biological role, plays an essential role in the virus replication cycle by acting as a viroporin. Creates a pore in the host endoplasmic reticulum and as a consequence releases Ca2+ in the cytoplasm of infected cell. In turn, high levels of cytoplasmic calcium may trigger membrane trafficking and transport of viral ER-associated proteins to viroplasms, sites of viral genome replication. Its function is as follows. Induces and associates with structural rearrangements of intracellular membranes. Displays RNA-binding, nucleotide binding and NTPase activities. May play a role in virion morphogenesis and viral RNA encapsidation by interacting with the capsid protein VP3. Functionally, localizes the viral replication complex to the surface of membranous vesicles. Together with protein 3CD binds the Cis-Active RNA Element (CRE) which is involved in RNA synthesis initiation. Acts as a cofactor to stimulate the activity of 3D polymerase, maybe through a nucleid acid chaperone activity. Localizes the viral replication complex to the surface of membranous vesicles. It inhibits host cell endoplasmic reticulum-to-Golgi apparatus transport and causes the disassembly of the Golgi complex, possibly through GBF1 interaction. This would result in depletion of MHC, trail receptors and IFN receptors at the host cell surface. Plays an essential role in viral RNA replication by recruiting ACBD3 and PI4KB at the viral replication sites, thereby allowing the formation of the rearranged membranous structures where viral replication takes place. In terms of biological role, acts as a primer for viral RNA replication and remains covalently bound to viral genomic RNA. VPg is uridylylated prior to priming replication into VPg-pUpU. The oriI viral genomic sequence may act as a template for this. The VPg-pUpU is then used as primer on the genomic RNA poly(A) by the RNA-dependent RNA polymerase to replicate the viral genome. During genome replication, the VPg-RNA linkage is removed by the host TDP2, thereby accelerating replication. During the late stage of the replication cycle, host TDP2 is excluded from sites of viral RNA synthesis and encapsidation, allowing for the generation of progeny virions. Its function is as follows. Involved in the viral replication complex and viral polypeptide maturation. It exhibits protease activity with a specificity and catalytic efficiency that is different from protease 3C. Protein 3CD lacks polymerase activity. Protein 3CD binds to the 5'UTR of the viral genome. Functionally, replicates the viral genomic RNA on the surface of intracellular membranes. May form linear arrays of subunits that propagate along a strong head-to-tail interaction called interface-I. Covalently attaches UMP to a tyrosine of VPg, which is used to prime RNA synthesis. The positive stranded RNA genome is first replicated at virus induced membranous vesicles, creating a dsRNA genomic replication form. This dsRNA is then used as template to synthesize positive stranded RNA genomes. ss(+)RNA genomes are either translated, replicated or encapsidated. Major viral protease that mediates proteolytic processing of the polyprotein. Cleaves host EIF5B, contributing to host translation shutoff. Also cleaves host PABPC1, contributing to host translation shutoff. Cleaves host NLRP1, triggers host N-glycine-mediated degradation of the autoinhibitory NLRP1 N-terminal fragment. In Homo sapiens (Human), this protein is Genome polyprotein.